The primary structure comprises 777 residues: 1,4-alpha-glucan branching enzyme GlgB (777 aa).

D408 acts as the Nucleophile in catalysis. The Proton donor role is filled by E461.

It belongs to the glycosyl hydrolase 13 family. GlgB subfamily. In terms of assembly, monomer.

The catalysed reaction is Transfers a segment of a (1-&gt;4)-alpha-D-glucan chain to a primary hydroxy group in a similar glucan chain.. It functions in the pathway glycan biosynthesis; glycogen biosynthesis. Functionally, catalyzes the formation of the alpha-1,6-glucosidic linkages in glycogen by scission of a 1,4-alpha-linked oligosaccharide from growing alpha-1,4-glucan chains and the subsequent attachment of the oligosaccharide to the alpha-1,6 position. In Actinobacillus pleuropneumoniae serotype 5b (strain L20), this protein is 1,4-alpha-glucan branching enzyme GlgB.